The following is a 152-amino-acid chain: Protein Smg homolog (152 aa).

Belongs to the Smg family.

This chain is Protein Smg homolog, found in Chromobacterium violaceum (strain ATCC 12472 / DSM 30191 / JCM 1249 / CCUG 213 / NBRC 12614 / NCIMB 9131 / NCTC 9757 / MK).